Here is a 327-residue protein sequence, read N- to C-terminus: tRNA-dihydrouridine(20/20a) synthase (327 aa).

FMN-binding positions include Pro-17–Leu-19 and Gln-69. The active-site Proton donor is the Cys-99. FMN contacts are provided by residues Lys-138, His-170, Asn-210–Gly-212, and Gly-232–Arg-233.

It belongs to the Dus family. DusA subfamily. Requires FMN as cofactor.

It carries out the reaction 5,6-dihydrouridine(20) in tRNA + NADP(+) = uridine(20) in tRNA + NADPH + H(+). The enzyme catalyses 5,6-dihydrouridine(20) in tRNA + NAD(+) = uridine(20) in tRNA + NADH + H(+). The catalysed reaction is 5,6-dihydrouridine(20a) in tRNA + NADP(+) = uridine(20a) in tRNA + NADPH + H(+). It catalyses the reaction 5,6-dihydrouridine(20a) in tRNA + NAD(+) = uridine(20a) in tRNA + NADH + H(+). Functionally, catalyzes the synthesis of 5,6-dihydrouridine (D), a modified base found in the D-loop of most tRNAs, via the reduction of the C5-C6 double bond in target uridines. Specifically modifies U20 and U20a in tRNAs. The sequence is that of tRNA-dihydrouridine(20/20a) synthase from Pasteurella multocida (strain Pm70).